Reading from the N-terminus, the 435-residue chain is ATP-dependent protease ATPase subunit HslU (435 aa).

Residues Ile-18, 60–65, Asp-248, Glu-313, and Arg-385 each bind ATP; that span reads GVGKTE.

The protein belongs to the ClpX chaperone family. HslU subfamily. As to quaternary structure, a double ring-shaped homohexamer of HslV is capped on each side by a ring-shaped HslU homohexamer. The assembly of the HslU/HslV complex is dependent on binding of ATP.

It localises to the cytoplasm. ATPase subunit of a proteasome-like degradation complex; this subunit has chaperone activity. The binding of ATP and its subsequent hydrolysis by HslU are essential for unfolding of protein substrates subsequently hydrolyzed by HslV. HslU recognizes the N-terminal part of its protein substrates and unfolds these before they are guided to HslV for hydrolysis. The polypeptide is ATP-dependent protease ATPase subunit HslU (Rhizobium johnstonii (strain DSM 114642 / LMG 32736 / 3841) (Rhizobium leguminosarum bv. viciae)).